The chain runs to 1386 residues: YLP motif-containing protein 1 (1386 aa).

Disordered stretches follow at residues 1 to 336 (MYPN…EDAR) and 517 to 1068 (TSIP…PPGR). The segment covering 14 to 27 (YPPPPVPPPPPPVA) has biased composition (pro residues). Low complexity-rich tracts occupy residues 31 to 50 (ASPG…SSSG) and 59 to 80 (LAQL…LQPH). Pro residues-rich tracts occupy residues 81–93 (HLPP…PPVM), 102–114 (QPPP…PPGP), 148–158 (PESPPVPPGSY), 166–176 (MPPPQPPPSYY), and 184–203 (YLPP…PPSI). Residues 237 to 259 (STMTPQEQQQYWYRQHLLSLQQR) show a composition bias toward polar residues. Residues 260–270 (TKVHLPGHKKG) show a composition bias toward basic residues. Over residues 276–285 (DVPEPIKEEA) the composition is skewed to basic and acidic residues. Over residues 302 to 317 (PPLPPPNEEAPPPLSP) the composition is skewed to pro residues. Acidic residues predominate over residues 320–333 (PQSEDSEDSEDSEE). Pro residues-rich tracts occupy residues 517 to 558 (TSIP…PPPA), 566 to 603 (PVLP…PQGM), and 641 to 650 (PPSPYHPPPQ). Residues 651–667 (SEQVNSKPLNKVFSSEQ) are compositionally biased toward polar residues. N6-methyllysine is present on lysine 683. The segment covering 706–722 (RGPREQKEQLQKLKDFG) has biased composition (basic and acidic residues). Residues 746–761 (MYPPPGSYRPPPPMGK) are compositionally biased toward pro residues. Residues 762-779 (PPGSIVRPSAPPARSSIP) show a composition bias toward low complexity. Composition is skewed to pro residues over residues 781 to 803 (TRPP…PPPV) and 848 to 878 (PVLP…PPPV). Residue lysine 894 forms a Glycyl lysine isopeptide (Lys-Gly) (interchain with G-Cter in SUMO2) linkage. 4 stretches are compositionally biased toward basic and acidic residues: residues 904–938 (ITLR…EPYF), 945–1014 (TDHR…DRPP), 1023–1033 (GERRTYPEERM), and 1049–1068 (RVEK…PPGR). Lysine 951 participates in a covalent cross-link: Glycyl lysine isopeptide (Lys-Gly) (interchain with G-Cter in SUMO2). Residues 1336-1343 (KKRVRWAD) form an involved in interaction with PPP1CA region.

Interacts with PPP1CA and NCOA5. Forms a complex with ILF2, ILF3, KHDRBS1, RBMX, NCOA5 and PPP1CA.

It localises to the nucleus. Its subcellular location is the nucleus speckle. Functionally, plays a role in the reduction of telomerase activity during differentiation of embryonic stem cells by binding to the core promoter of TERT and controlling its down-regulation. This is YLP motif-containing protein 1 (Ylpm1) from Mus musculus (Mouse).